We begin with the raw amino-acid sequence, 646 residues long: ATP-dependent rRNA helicase SPB4 (646 aa).

Positions 15–43 match the Q motif motif; that stretch reads WGALTPSLAPWILDYLSSMGFEQPTPVQK. The region spanning 46-247 is the Helicase ATP-binding domain; sequence FDIFRGNKDV…TVGLLYPHKI (202 aa). 59 to 66 is a binding site for ATP; that stretch reads AVTGSGKT. Positions 195–198 match the DEAD box motif; the sequence is DEAD. A Helicase C-terminal domain is found at 284–434; the sequence is ALCQLLERLE…PLAKPPVSVT (151 aa). Composition is skewed to basic and acidic residues over residues 539–548 and 566–581; these read KKEKAAREAQ and NEAW…VKAA. The interval 539 to 646 is disordered; sequence KKEKAAREAQ…GGDEFEGFDD (108 aa). Positions 572-623 form a coiled coil; sequence KHEHEDVKAARREKKRRKREAQRLGDMTEPEREEQRKLDEMIAEVRRRNAEA. The segment covering 582–591 has biased composition (basic residues); the sequence is RREKKRRKRE. The segment covering 600 to 621 has biased composition (basic and acidic residues); the sequence is EPEREEQRKLDEMIAEVRRRNA. Over residues 622 to 631 the composition is skewed to low complexity; that stretch reads EAPTPAAQAA.

Belongs to the DEAD box helicase family. DDX55/SPB4 subfamily. As to quaternary structure, component of pre-60S ribosomal complexes.

Its subcellular location is the nucleus. The protein localises to the nucleolus. The catalysed reaction is ATP + H2O = ADP + phosphate + H(+). Its function is as follows. ATP-binding RNA helicase involved in the biogenesis of 60S ribosomal subunits. Binds 90S pre-ribosomal particles and dissociates from pre-60S ribosomal particles after processing of 27SB pre-rRNA. Required for the normal formation of 18S rRNA through the processing of pre-rRNAs at sites A0, A1 and A2, and the normal formation of 25S and 5.8S rRNAs through the processing of pre-rRNAs at sites C1 and C2. The sequence is that of ATP-dependent rRNA helicase SPB4 from Chaetomium globosum (strain ATCC 6205 / CBS 148.51 / DSM 1962 / NBRC 6347 / NRRL 1970) (Soil fungus).